The chain runs to 225 residues: Probable iron export ATP-binding protein FetA (225 aa).

One can recognise an ABC transporter domain in the interval 8–225; it reads LQLQNVGYLA…EMQEARYELA (218 aa). 40–47 lines the ATP pocket; it reads GPSGCGKS.

Belongs to the ABC transporter superfamily. The complex is composed of two ATP-binding proteins (FetA) and two transmembrane proteins (FetB).

Its subcellular location is the cell inner membrane. In terms of biological role, part of the ABC transporter complex FetAB, which is probably involved in iron export and enhances resistance to H(2)O(2)-mediated oxidative stress. Probably responsible for energy coupling to the transport system. The chain is Probable iron export ATP-binding protein FetA (fetA) from Escherichia coli (strain K12).